Here is a 1645-residue protein sequence, read N- to C-terminus: Thrombospondin type-1 domain-containing protein 7A (1645 aa).

Positions 1 to 38 (MGLRAGRLASPSRGVLQLLRLPLLLLLLLSSGARGAAA) are cleaved as a signal peptide. The Extracellular portion of the chain corresponds to 39 to 1595 (QGDTEVPTLY…FGPDGRLKTW (1557 aa)). 3 TSP type-1 domains span residues 46–105 (TLYL…KVCD), 109–181 (ELYD…IPCQ), and 183–236 (DCIV…NPCE). N-linked (GlcNAc...) asparagine glycosylation is present at N223. Positions 255–300 (PHTRQARQARRRGKNKEREKERGKAVKDPEARELIKKKRNRNRQNR) are disordered. Residues 256–304 (HTRQARQARRRGKNKEREKERGKAVKDPEARELIKKKRNRNRQNRQENR) adopt a coiled-coil conformation. The span at 258 to 269 (RQARQARRRGKN) shows a compositional bias: basic residues. The span at 270-288 (KEREKERGKAVKDPEAREL) shows a compositional bias: basic and acidic residues. Residues 289 to 298 (IKKKRNRNRQ) are compositionally biased toward basic residues. An N-linked (GlcNAc...) asparagine glycan is attached at N321. TSP type-1 domains follow at residues 349 to 405 (ECQV…VSQG), 412 to 499 (ATYG…VPCP), 501 to 563 (ECEV…PSCY), 623 to 684 (DCVL…HPCT), 685 to 758 (VYHW…LPCR), 760 to 820 (DCVV…PTCH), 821 to 893 (SYRW…IPCQ), 895 to 948 (DCQF…CPCD), 949 to 1022 (KYNA…IPCP), 1024 to 1084 (DCKL…SDCN), 1085 to 1152 (QYIW…LPCP), 1154 to 1208 (DCVI…KNCY), 1209 to 1272 (HYDY…VECP), 1274 to 1329 (NCQL…KPCY), 1330 to 1400 (RWQY…QPCP), and 1402 to 1463 (DCYL…GQCY). Cystine bridges form between C424-C494, C444-C498, and C455-C483. N439 is a glycosylation site (N-linked (GlcNAc...) asparagine). A glycan (N-linked (GlcNAc...) asparagine) is linked at N489. Disulfide bonds link C624–C666 and C635–C639. N-linked (GlcNAc...) asparagine glycosylation is present at N668. Cystine bridges form between C678–C683, C696–C753, C717–C757, C728–C741, C761–C803, C772–C776, and C813–C819. The N-linked (GlcNAc...) asparagine glycan is linked to N706. An N-linked (GlcNAc...) asparagine glycan is attached at N957. 6 disulfides stabilise this stretch: C961-C1017, C983-C1021, C994-C1007, C1025-C1062, C1036-C1040, and C1079-C1083. A glycan (N-linked (GlcNAc...) asparagine) is linked at N1032. An intrachain disulfide couples C1201 to C1207. N1213 carries an N-linked (GlcNAc...) asparagine glycan. 12 disulfides stabilise this stretch: C1220/C1267, C1228/C1271, C1239/C1252, C1275/C1313, C1286/C1290, C1323/C1328, C1339/C1395, C1346/C1399, C1357/C1376, C1403/C1447, C1414/C1418, and C1457/C1462. N-linked (GlcNAc...) asparagine glycosylation is present at N1264. N1354 carries N-linked (GlcNAc...) asparagine glycosylation. N-linked (GlcNAc...) asparagine glycosylation is found at N1488 and N1535. The helical transmembrane segment at 1596–1616 (VYGVAAGAFVLLVFIVSMIYL) threads the bilayer. Topologically, residues 1617–1645 (ACKKPKKPQRRQNNRLKPLTLAYDGDADM) are cytoplasmic.

In terms of processing, proteolytic cleavage in the extracellular region generates a 210 kDa soluble form. Post-translationally, extensively N-glycosylated. As to expression, detected on kidney podocytes along the glomerular capillary wall (at protein level).

The protein resides in the cell membrane. It is found in the cell projection. The protein localises to the secreted. In terms of biological role, plays a role in actin cytoskeleton rearrangement. The soluble form promotes endothelial cell migration and filopodia formation during sprouting angiogenesis via a FAK-dependent mechanism. The sequence is that of Thrombospondin type-1 domain-containing protein 7A (Thsd7a) from Mus musculus (Mouse).